The primary structure comprises 283 residues: Quinate/shikimate dehydrogenase (NAD(+)) (283 aa).

Shikimate is bound by residues Ser-17, Thr-69, Lys-73, Asn-94, and Asp-110. L-quinate is bound by residues 17 to 19 (SRT), Thr-69, Lys-73, Asn-94, and Asp-110. Lys-73 (proton acceptor) is an active-site residue. NAD(+) is bound by residues 137 to 138 (GV), Asp-158, Arg-163, 203 to 206 (PMGM), Ala-213, Val-228, and Gly-251. Gln-258 is a shikimate binding site. Gln-258 lines the L-quinate pocket.

Belongs to the shikimate dehydrogenase family. As to quaternary structure, homodimer.

It catalyses the reaction L-quinate + NAD(+) = 3-dehydroquinate + NADH + H(+). The enzyme catalyses shikimate + NAD(+) = 3-dehydroshikimate + NADH + H(+). The protein operates within metabolic intermediate biosynthesis; chorismate biosynthesis; chorismate from D-erythrose 4-phosphate and phosphoenolpyruvate: step 4/7. Its pathway is aromatic compound metabolism; 3,4-dihydroxybenzoate biosynthesis; 3-dehydroquinate from D-quinate (NAD(+) route). Functionally, involved in the biosynthesis of the chorismate, which leads to the biosynthesis of aromatic amino acids, and plays a key role in the quinate degradation pathway. Catalyzes the NAD(+)-dependent oxidation of both quinate and shikimate to 3-dehydroquinate and 3-dehydroshikimate, respectively. The protein is Quinate/shikimate dehydrogenase (NAD(+)) of Corynebacterium glutamicum (strain R).